An 846-amino-acid polypeptide reads, in one-letter code: uncharacterized protein (846 aa).

WD repeat units lie at residues 88–129, 132–172, 175–215, 219–258, 262–309, and 313–348; these read TKHI…LLYD, EHSR…STIT, GNSE…LPFL, AHNG…KKSL, NNVS…IPYR, and CHDS…NAFN. The interval 541-560 is disordered; sequence PREASTPSESSNSSIESEDN. Over residues 544–555 the composition is skewed to low complexity; the sequence is ASTPSESSNSSI. A WD 7 repeat occupies 624 to 663; it reads FHRSSVTSASIKSREAVLSAGNSSRRASIFLDQLSLHGDT.

This is an uncharacterized protein from Schizosaccharomyces pombe (strain 972 / ATCC 24843) (Fission yeast).